A 110-amino-acid chain; its full sequence is Large ribosomal subunit protein uL22 (110 aa).

Belongs to the universal ribosomal protein uL22 family. As to quaternary structure, part of the 50S ribosomal subunit.

This protein binds specifically to 23S rRNA; its binding is stimulated by other ribosomal proteins, e.g. L4, L17, and L20. It is important during the early stages of 50S assembly. It makes multiple contacts with different domains of the 23S rRNA in the assembled 50S subunit and ribosome. In terms of biological role, the globular domain of the protein is located near the polypeptide exit tunnel on the outside of the subunit, while an extended beta-hairpin is found that lines the wall of the exit tunnel in the center of the 70S ribosome. In Mannheimia succiniciproducens (strain KCTC 0769BP / MBEL55E), this protein is Large ribosomal subunit protein uL22.